The chain runs to 477 residues: MKVTLPEFERAGVMVVGDVMLDRYWYGPTSRISPEAPVPVVKVNTIEERPGGAANVAMNIASLGANARLVGLTGIDDAARALSKSLADVNVKCDFVSVPTHPTITKLRVLSRNQQLIRLDFEEGFEGVDPQPLHERINQALSSIGALVLSDYAKGALASVQQMIQLARKAGVPVLIDPKGTDFERYRGATLLTPNLSEFEAVVGKCKTEEEIVERGMKLIADYELSALLVTRSEQGMSLLQPGKAPLHMPTQAQEVYDVTGAGDTVIGVLAATLAAGNSLEEACFFANAAAGVVVGKLGTSTVSPIELENAVRGRADTGFGVMTEEELKLAVAAARKRGEKVVMTNGVFDILHAGHVSYLANARKLGDRLIVAVNSDASTKRLKGDSRPVNPLEQRMIVLGALEAVDWVVSFEEDTPQRLIAGILPDLLVKGGDYKPEEIAGSKEVWANGGEVLVLNFEDGCSTTNIIKKIQLDKKG.

Positions 1–318 (MKVTLPEFER…ENAVRGRADT (318 aa)) are ribokinase. At Lys179 the chain carries N6-acetyllysine. 195 to 198 (NLSE) provides a ligand contact to ATP. Asp264 is a catalytic residue. Residues 344 to 477 (MTNGVFDILH…IKKIQLDKKG (134 aa)) form a cytidylyltransferase region.

The protein in the N-terminal section; belongs to the carbohydrate kinase PfkB family. It in the C-terminal section; belongs to the cytidylyltransferase family. In terms of assembly, homodimer.

It catalyses the reaction D-glycero-beta-D-manno-heptose 7-phosphate + ATP = D-glycero-beta-D-manno-heptose 1,7-bisphosphate + ADP + H(+). The enzyme catalyses D-glycero-beta-D-manno-heptose 1-phosphate + ATP + H(+) = ADP-D-glycero-beta-D-manno-heptose + diphosphate. The protein operates within nucleotide-sugar biosynthesis; ADP-L-glycero-beta-D-manno-heptose biosynthesis; ADP-L-glycero-beta-D-manno-heptose from D-glycero-beta-D-manno-heptose 7-phosphate: step 1/4. It functions in the pathway nucleotide-sugar biosynthesis; ADP-L-glycero-beta-D-manno-heptose biosynthesis; ADP-L-glycero-beta-D-manno-heptose from D-glycero-beta-D-manno-heptose 7-phosphate: step 3/4. In terms of biological role, catalyzes the phosphorylation of D-glycero-D-manno-heptose 7-phosphate at the C-1 position to selectively form D-glycero-beta-D-manno-heptose-1,7-bisphosphate. Functionally, catalyzes the ADP transfer from ATP to D-glycero-beta-D-manno-heptose 1-phosphate, yielding ADP-D-glycero-beta-D-manno-heptose. This chain is Bifunctional protein HldE, found in Escherichia coli O81 (strain ED1a).